Consider the following 786-residue polypeptide: LPS-assembly protein LptD (786 aa).

An N-terminal signal peptide occupies residues 1–39; the sequence is MPPKPLFPNVFPGDGAPRKRRLALALLAVPGLVPAVSYA. The tract at residues 767–786 is disordered; sequence PGYTPLPPPPPPMSRFSNYE. The segment covering 770-779 has biased composition (pro residues); sequence TPLPPPPPPM.

Belongs to the LptD family. Component of the lipopolysaccharide transport and assembly complex. Interacts with LptE and LptA.

It is found in the cell outer membrane. In terms of biological role, together with LptE, is involved in the assembly of lipopolysaccharide (LPS) at the surface of the outer membrane. The chain is LPS-assembly protein LptD from Burkholderia lata (strain ATCC 17760 / DSM 23089 / LMG 22485 / NCIMB 9086 / R18194 / 383).